Here is a 522-residue protein sequence, read N- to C-terminus: Ribose import ATP-binding protein RbsA 1 (522 aa).

ABC transporter domains follow at residues Leu8–Ile243 and Arg249–Asn496. Gly40–Ser47 provides a ligand contact to ATP. Residues Ala492–His522 are disordered. Over residues Lys499–His522 the composition is skewed to basic and acidic residues.

Belongs to the ABC transporter superfamily. Ribose importer (TC 3.A.1.2.1) family. In terms of assembly, the complex is composed of an ATP-binding protein (RbsA), two transmembrane proteins (RbsC) and a solute-binding protein (RbsB).

The protein localises to the cell membrane. It carries out the reaction D-ribose(out) + ATP + H2O = D-ribose(in) + ADP + phosphate + H(+). Its function is as follows. Part of the ABC transporter complex RbsABC involved in ribose import. Responsible for energy coupling to the transport system. This Streptomyces avermitilis (strain ATCC 31267 / DSM 46492 / JCM 5070 / NBRC 14893 / NCIMB 12804 / NRRL 8165 / MA-4680) protein is Ribose import ATP-binding protein RbsA 1.